An 875-amino-acid chain; its full sequence is DNA mismatch repair protein MutS (875 aa).

ATP is bound at residue 626–633 (GPNMAGKS). The interval 830–855 (RAAPPPPAPAAPKTSPVEERLREIQP) is disordered. Residues 845–855 (PVEERLREIQP) show a composition bias toward basic and acidic residues.

Belongs to the DNA mismatch repair MutS family.

Functionally, this protein is involved in the repair of mismatches in DNA. It is possible that it carries out the mismatch recognition step. This protein has a weak ATPase activity. This is DNA mismatch repair protein MutS from Cereibacter sphaeroides (strain ATCC 17023 / DSM 158 / JCM 6121 / CCUG 31486 / LMG 2827 / NBRC 12203 / NCIMB 8253 / ATH 2.4.1.) (Rhodobacter sphaeroides).